The chain runs to 211 residues: Large ribosomal subunit protein uL3 (211 aa).

The disordered stretch occupies residues G116–G142.

This sequence belongs to the universal ribosomal protein uL3 family. Part of the 50S ribosomal subunit. Forms a cluster with proteins L14 and L19.

Its function is as follows. One of the primary rRNA binding proteins, it binds directly near the 3'-end of the 23S rRNA, where it nucleates assembly of the 50S subunit. The polypeptide is Large ribosomal subunit protein uL3 (Fusobacterium nucleatum subsp. nucleatum (strain ATCC 25586 / DSM 15643 / BCRC 10681 / CIP 101130 / JCM 8532 / KCTC 2640 / LMG 13131 / VPI 4355)).